Consider the following 609-residue polypeptide: Proteasome-associated ATPase (609 aa).

The interval 1 to 24 is disordered; sequence MADSERSEAFGTPDDTPLSSNDAA. Positions 19–96 form a coiled coil; the sequence is SSNDAAELEQ…LREEVDRLGQ (78 aa). 296–301 is an ATP binding site; that stretch reads GCGKTL. A docks into pockets in the proteasome alpha-ring region spans residues 608-609; it reads YL.

The protein belongs to the AAA ATPase family. Homohexamer. Assembles into a hexameric ring structure that caps the 20S proteasome core. Strongly interacts with the prokaryotic ubiquitin-like protein Pup through a hydrophobic interface; the interacting region of ARC lies in its N-terminal coiled-coil domain. There is one Pup binding site per ARC hexamer ring. Upon ATP-binding, the C-terminus of ARC interacts with the alpha-rings of the proteasome core, possibly by binding to the intersubunit pockets.

It participates in protein degradation; proteasomal Pup-dependent pathway. ATPase which is responsible for recognizing, binding, unfolding and translocation of pupylated proteins into the bacterial 20S proteasome core particle. May be essential for opening the gate of the 20S proteasome via an interaction with its C-terminus, thereby allowing substrate entry and access to the site of proteolysis. Thus, the C-termini of the proteasomal ATPase may function like a 'key in a lock' to induce gate opening and therefore regulate proteolysis. This is Proteasome-associated ATPase from Mycobacterium ulcerans (strain Agy99).